The chain runs to 498 residues: Glycerol kinase 1 (498 aa).

Thr-12 is an ADP binding site. ATP-binding residues include Thr-12, Thr-13, and Ser-14. Thr-12 serves as a coordination point for sn-glycerol 3-phosphate. Residue Arg-16 coordinates ADP. Positions 82, 83, 134, and 243 each coordinate sn-glycerol 3-phosphate. Positions 82, 83, 134, 243, and 244 each coordinate glycerol. Positions 265 and 308 each coordinate ADP. The ATP site is built by Thr-265, Gly-308, Gln-312, and Gly-409. Positions 409 and 413 each coordinate ADP.

It belongs to the FGGY kinase family. Homotetramer and homodimer (in equilibrium).

The enzyme catalyses glycerol + ATP = sn-glycerol 3-phosphate + ADP + H(+). It functions in the pathway polyol metabolism; glycerol degradation via glycerol kinase pathway; sn-glycerol 3-phosphate from glycerol: step 1/1. Activated by phosphorylation and inhibited by fructose 1,6-bisphosphate (FBP). Functionally, key enzyme in the regulation of glycerol uptake and metabolism. Catalyzes the phosphorylation of glycerol to yield sn-glycerol 3-phosphate. In Clostridium tetani (strain Massachusetts / E88), this protein is Glycerol kinase 1.